A 281-amino-acid chain; its full sequence is Putative phosphatase MPN_264 (281 aa).

Residue aspartate 8 is the Nucleophile of the active site. Aspartate 8 provides a ligand contact to Mg(2+). Position 9 (leucine 9) interacts with phosphate. A Mg(2+)-binding site is contributed by aspartate 10. Phosphate is bound by residues 44 to 45 (TG) and lysine 205. Mg(2+) is bound by residues aspartate 228 and serine 229. Asparagine 231 serves as a coordination point for phosphate.

Belongs to the HAD-like hydrolase superfamily. Cof family. It depends on Mg(2+) as a cofactor.

The sequence is that of Putative phosphatase MPN_264 from Mycoplasma pneumoniae (strain ATCC 29342 / M129 / Subtype 1) (Mycoplasmoides pneumoniae).